Here is a 325-residue protein sequence, read N- to C-terminus: Tetraacyldisaccharide 4'-kinase (325 aa).

55 to 62 (TAGGNGKT) is a binding site for ATP.

This sequence belongs to the LpxK family.

The enzyme catalyses a lipid A disaccharide + ATP = a lipid IVA + ADP + H(+). It participates in glycolipid biosynthesis; lipid IV(A) biosynthesis; lipid IV(A) from (3R)-3-hydroxytetradecanoyl-[acyl-carrier-protein] and UDP-N-acetyl-alpha-D-glucosamine: step 6/6. In terms of biological role, transfers the gamma-phosphate of ATP to the 4'-position of a tetraacyldisaccharide 1-phosphate intermediate (termed DS-1-P) to form tetraacyldisaccharide 1,4'-bis-phosphate (lipid IVA). This chain is Tetraacyldisaccharide 4'-kinase, found in Salmonella agona (strain SL483).